We begin with the raw amino-acid sequence, 162 residues long: NADH-quinone oxidoreductase subunit C (162 aa).

This sequence belongs to the complex I 30 kDa subunit family. NDH-1 is composed of 14 different subunits. Subunits NuoB, C, D, E, F, and G constitute the peripheral sector of the complex.

The protein localises to the cell inner membrane. The enzyme catalyses a quinone + NADH + 5 H(+)(in) = a quinol + NAD(+) + 4 H(+)(out). NDH-1 shuttles electrons from NADH, via FMN and iron-sulfur (Fe-S) centers, to quinones in the respiratory chain. The immediate electron acceptor for the enzyme in this species is believed to be ubiquinone. Couples the redox reaction to proton translocation (for every two electrons transferred, four hydrogen ions are translocated across the cytoplasmic membrane), and thus conserves the redox energy in a proton gradient. This is NADH-quinone oxidoreductase subunit C from Geobacter metallireducens (strain ATCC 53774 / DSM 7210 / GS-15).